A 328-amino-acid chain; its full sequence is Eukaryotic translation initiation factor 3 subunit I (328 aa).

WD repeat units lie at residues 8 to 49 (GHER…GTYE), 50 to 89 (GHTG…QLYK), 145 to 184 (TRES…FVES), 189 to 228 (NSGS…VIKT), and 286 to 327 (GHFG…FKYT).

It belongs to the eIF-3 subunit I family. As to quaternary structure, component of the eukaryotic translation initiation factor 3 (eIF-3) complex. The eIF-3 complex appears to include tif32/eif3a, SPAC25G10.08/eif3b, tif33/eif3c, SPBC4C3.07/eif3f, tif35/eif3g and sum1/eif3i. This set of common subunits may also associate exclusively with either moe1/eif3d and int6/eif3e, or with SPAC821.05/eif3h and SPAC1751.03/eif3m. The eIF-3 complex may also include SPAC3A12.13c/eif3j.

It localises to the cytoplasm. The protein resides in the nucleus. Functionally, component of the eukaryotic translation initiation factor 3 (eIF-3) complex, which is involved in protein synthesis of a specialized repertoire of mRNAs and, together with other initiation factors, stimulates binding of mRNA and methionyl-tRNAi to the 40S ribosome. The eIF-3 complex specifically targets and initiates translation of a subset of mRNAs involved in cell proliferation. This is Eukaryotic translation initiation factor 3 subunit I (sum1) from Schizosaccharomyces pombe (strain 972 / ATCC 24843) (Fission yeast).